The following is a 161-amino-acid chain: Phosphopantetheine adenylyltransferase (161 aa).

Residue S9 participates in substrate binding. Residues 9–10 (SF) and H17 each bind ATP. Residues K41, T73, and R87 each coordinate substrate. ATP-binding positions include 88–90 (GLR), E98, and 123–129 (FAHISST).

Belongs to the bacterial CoaD family. Homohexamer. Mg(2+) is required as a cofactor.

It is found in the cytoplasm. The catalysed reaction is (R)-4'-phosphopantetheine + ATP + H(+) = 3'-dephospho-CoA + diphosphate. The protein operates within cofactor biosynthesis; coenzyme A biosynthesis; CoA from (R)-pantothenate: step 4/5. Functionally, reversibly transfers an adenylyl group from ATP to 4'-phosphopantetheine, yielding dephospho-CoA (dPCoA) and pyrophosphate. This chain is Phosphopantetheine adenylyltransferase, found in Chloroflexus aurantiacus (strain ATCC 29366 / DSM 635 / J-10-fl).